Reading from the N-terminus, the 288-residue chain is Small ribosomal subunit protein uS3 (288 aa).

Residues 38-106 enclose the KH type-2 domain; it reads IRRMMSKGLE…QVQLNIIEVK (69 aa). Positions 209 to 288 are disordered; that stretch reads PGRETPAEAP…TQPAETQQEG (80 aa). Over residues 219 to 232 the composition is skewed to basic and acidic residues; that stretch reads SRPRRERGDRSERP. Over residues 249–264 the composition is skewed to low complexity; sequence AGRAAATTIAQAAETP. Residues 277–288 show a composition bias toward polar residues; it reads AATQPAETQQEG.

This sequence belongs to the universal ribosomal protein uS3 family. As to quaternary structure, part of the 30S ribosomal subunit. Forms a tight complex with proteins S10 and S14.

Binds the lower part of the 30S subunit head. Binds mRNA in the 70S ribosome, positioning it for translation. This is Small ribosomal subunit protein uS3 from Salinispora tropica (strain ATCC BAA-916 / DSM 44818 / JCM 13857 / NBRC 105044 / CNB-440).